The following is a 512-amino-acid chain: 2-isopropylmalate synthase (512 aa).

A Pyruvate carboxyltransferase domain is found at 4–266 (IQFFDTTLRD…ETNIVLNQFK (263 aa)). Residues D13, H201, H203, and N237 each contribute to the Mn(2+) site. The interval 390–512 (ELKHLQVQYV…SKQADFEEVK (123 aa)) is regulatory domain.

This sequence belongs to the alpha-IPM synthase/homocitrate synthase family. LeuA type 1 subfamily. As to quaternary structure, homodimer. Requires Mn(2+) as cofactor.

It localises to the cytoplasm. The enzyme catalyses 3-methyl-2-oxobutanoate + acetyl-CoA + H2O = (2S)-2-isopropylmalate + CoA + H(+). The protein operates within amino-acid biosynthesis; L-leucine biosynthesis; L-leucine from 3-methyl-2-oxobutanoate: step 1/4. Functionally, catalyzes the condensation of the acetyl group of acetyl-CoA with 3-methyl-2-oxobutanoate (2-ketoisovalerate) to form 3-carboxy-3-hydroxy-4-methylpentanoate (2-isopropylmalate). In Listeria innocua serovar 6a (strain ATCC BAA-680 / CLIP 11262), this protein is 2-isopropylmalate synthase.